Consider the following 149-residue polypeptide: Putative sugar phosphate isomerase YwlF (149 aa).

Substrate is bound at residue histidine 9. The active-site Proton acceptor is cysteine 66. 67–72 (GTGIGM) is a binding site for substrate. The Proton donor role is filled by histidine 99. Arginine 133 contributes to the substrate binding site.

It belongs to the LacAB/RpiB family.

The chain is Putative sugar phosphate isomerase YwlF (ywlF) from Bacillus subtilis (strain 168).